Here is a 350-residue protein sequence, read N- to C-terminus: tRNA uridine(34) hydroxylase (350 aa).

One can recognise a Rhodanese domain in the interval 146–240; sequence DDPDALFIDM…YARKAREQGL (95 aa). The active-site Cysteine persulfide intermediate is cysteine 200.

Belongs to the TrhO family.

The enzyme catalyses uridine(34) in tRNA + AH2 + O2 = 5-hydroxyuridine(34) in tRNA + A + H2O. Functionally, catalyzes oxygen-dependent 5-hydroxyuridine (ho5U) modification at position 34 in tRNAs. In Escherichia fergusonii (strain ATCC 35469 / DSM 13698 / CCUG 18766 / IAM 14443 / JCM 21226 / LMG 7866 / NBRC 102419 / NCTC 12128 / CDC 0568-73), this protein is tRNA uridine(34) hydroxylase.